The sequence spans 121 residues: uncharacterized protein (121 aa).

The signal sequence occupies residues 1–19 (MKKFALATIFALATTSAFA).

The protein to E.coli YgiW.

The protein resides in the periplasm. This is an uncharacterized protein from Haemophilus influenzae (strain ATCC 51907 / DSM 11121 / KW20 / Rd).